We begin with the raw amino-acid sequence, 375 residues long: Nicotinate-nucleotide--dimethylbenzimidazole phosphoribosyltransferase (375 aa).

Glu323 functions as the Proton acceptor in the catalytic mechanism. The segment at 344–375 is disordered; sequence LPEKPEELEAGEGPEAAEESSPEPENPEALAE. Acidic residues predominate over residues 351–375; that stretch reads LEAGEGPEAAEESSPEPENPEALAE.

It belongs to the CobT family.

It carries out the reaction 5,6-dimethylbenzimidazole + nicotinate beta-D-ribonucleotide = alpha-ribazole 5'-phosphate + nicotinate + H(+). It functions in the pathway nucleoside biosynthesis; alpha-ribazole biosynthesis; alpha-ribazole from 5,6-dimethylbenzimidazole: step 1/2. Catalyzes the synthesis of alpha-ribazole-5'-phosphate from nicotinate mononucleotide (NAMN) and 5,6-dimethylbenzimidazole (DMB). This is Nicotinate-nucleotide--dimethylbenzimidazole phosphoribosyltransferase from Streptomyces avermitilis (strain ATCC 31267 / DSM 46492 / JCM 5070 / NBRC 14893 / NCIMB 12804 / NRRL 8165 / MA-4680).